We begin with the raw amino-acid sequence, 530 residues long: Membrane-associated transporter protein (530 aa).

Residues 1–46 (MGSNSGQAGRHIYKSLADDGPFDSVEPPKRPTSRLIMHSMAMFGRE) lie on the Cytoplasmic side of the membrane. Residues 47 to 67 (FCYAVEAAYVTPVLLSVGLPS) traverse the membrane as a helical segment. A topological domain (extracellular) is located at residue serine 68. The helical transmembrane segment at 69–89 (LYSIVWFLSPILGFLLQPVVG) threads the bilayer. The Cytoplasmic segment spans residues 90-110 (SASDHCRSRWGRRRPYILTLG). The helical transmembrane segment at 111-131 (VMMLVGMALYLNGATVVAALI) threads the bilayer. The Extracellular portion of the chain corresponds to 132-138 (ANPRRKL). The chain crosses the membrane as a helical span at residues 139–159 (VWAISVTMIGVVLFDFAADFI). The Cytoplasmic portion of the chain corresponds to 160–184 (DGPIKAYLFDVCSHQDKEKGLHYHA). The chain crosses the membrane as a helical span at residues 185-205 (LFTGFGGALGYLLGAIDWAHL). Residues 206 to 216 (ELGRLLGTEFQ) lie on the Extracellular side of the membrane. A helical membrane pass occupies residues 217–237 (VMFFFSALVLTLCFTVHLCSI). Over 238 to 318 (SEAPLTEVAK…ALVNMPPHYR (81 aa)) the chain is Cytoplasmic. The helical transmembrane segment at 319-339 (YLCISHLIGWTAFLSNMLFFT) threads the bilayer. At 340–366 (DFMGQIVYRGDPYSAHNSTEFLIYERG) the chain is on the extracellular side. N-linked (GlcNAc...) asparagine glycosylation occurs at asparagine 356. The chain crosses the membrane as a helical span at residues 367 to 387 (VEVGCWGLCINSVFSSLYSYF). Residues 388–398 (QKVLVSYIGLK) are Cytoplasmic-facing. Residues 399-419 (GLYFTGYLLFGLGTGFIGLFP) form a helical membrane-spanning segment. The Extracellular segment spans residues 420–425 (NVYSTL). The helical transmembrane segment at 426 to 446 (VLCSLFGVMSSTLYTVPFNLI) threads the bilayer. Topologically, residues 447 to 477 (TEYHREEEKERQQAPGGDPDNSVRGKGMDCA) are cytoplasmic. The helical transmembrane segment at 478–498 (TLTCMVQLAQILVGGGLGFLV) threads the bilayer. Topologically, residues 499–504 (NTAGTV) are extracellular. Residues 505-525 (VVVVITASAVALIGCCFVALF) traverse the membrane as a helical segment. The Cytoplasmic portion of the chain corresponds to 526 to 530 (VRYVD).

Belongs to the glycoside-pentoside-hexuronide (GPH) cation symporter transporter (TC 2.A.2) family. In terms of assembly, interacts with TYRP1. Expressed in mature melanocytes.

Its subcellular location is the melanosome membrane. The catalysed reaction is sucrose(out) + H(+)(out) = sucrose(in) + H(+)(in). It catalyses the reaction D-glucose(out) + H(+)(out) = D-glucose(in) + H(+)(in). Its function is as follows. Proton-associated glucose and sucrose transporter. May be able to transport also fructose. Expressed at a late melanosome maturation stage where functions as proton/glucose exporter which increase lumenal pH by decreasing glycolysis. Regulates melanogenesis by maintaining melanosome neutralization that is initially initiated by transient OCA2 and required for a proper function of the tyrosinase TYR. This is Membrane-associated transporter protein from Homo sapiens (Human).